The sequence spans 442 residues: Proline--tRNA ligase (442 aa).

The protein belongs to the class-II aminoacyl-tRNA synthetase family. ProS type 2 subfamily. As to quaternary structure, homodimer.

It localises to the cytoplasm. The enzyme catalyses tRNA(Pro) + L-proline + ATP = L-prolyl-tRNA(Pro) + AMP + diphosphate. Its function is as follows. Catalyzes the attachment of proline to tRNA(Pro) in a two-step reaction: proline is first activated by ATP to form Pro-AMP and then transferred to the acceptor end of tRNA(Pro). In Chelativorans sp. (strain BNC1), this protein is Proline--tRNA ligase.